Here is a 369-residue protein sequence, read N- to C-terminus: Peptide chain release factor 1 (369 aa).

Q238 carries the N5-methylglutamine modification.

Belongs to the prokaryotic/mitochondrial release factor family. In terms of processing, methylated by PrmC. Methylation increases the termination efficiency of RF1.

The protein resides in the cytoplasm. Functionally, peptide chain release factor 1 directs the termination of translation in response to the peptide chain termination codons UAG and UAA. In Parabacteroides distasonis (strain ATCC 8503 / DSM 20701 / CIP 104284 / JCM 5825 / NCTC 11152), this protein is Peptide chain release factor 1.